The sequence spans 304 residues: tRNA pseudouridine synthase B (304 aa).

Aspartate 38 serves as the catalytic Nucleophile.

It belongs to the pseudouridine synthase TruB family. Type 1 subfamily.

It catalyses the reaction uridine(55) in tRNA = pseudouridine(55) in tRNA. Functionally, responsible for synthesis of pseudouridine from uracil-55 in the psi GC loop of transfer RNAs. The sequence is that of tRNA pseudouridine synthase B from Listeria welshimeri serovar 6b (strain ATCC 35897 / DSM 20650 / CCUG 15529 / CIP 8149 / NCTC 11857 / SLCC 5334 / V8).